Consider the following 256-residue polypeptide: Acetyl-coenzyme A carboxylase carboxyl transferase subunit alpha (256 aa).

The region spanning 1–236 (MTKITRIVRE…KQELLVELEQ (236 aa)) is the CoA carboxyltransferase C-terminal domain.

It belongs to the AccA family. In terms of assembly, acetyl-CoA carboxylase is a heterohexamer composed of biotin carboxyl carrier protein (AccB), biotin carboxylase (AccC) and two subunits each of ACCase subunit alpha (AccA) and ACCase subunit beta (AccD).

The protein resides in the cytoplasm. It carries out the reaction N(6)-carboxybiotinyl-L-lysyl-[protein] + acetyl-CoA = N(6)-biotinyl-L-lysyl-[protein] + malonyl-CoA. It functions in the pathway lipid metabolism; malonyl-CoA biosynthesis; malonyl-CoA from acetyl-CoA: step 1/1. Functionally, component of the acetyl coenzyme A carboxylase (ACC) complex. First, biotin carboxylase catalyzes the carboxylation of biotin on its carrier protein (BCCP) and then the CO(2) group is transferred by the carboxyltransferase to acetyl-CoA to form malonyl-CoA. This chain is Acetyl-coenzyme A carboxylase carboxyl transferase subunit alpha, found in Streptococcus gordonii (strain Challis / ATCC 35105 / BCRC 15272 / CH1 / DL1 / V288).